Here is a 209-residue protein sequence, read N- to C-terminus: Ribosomal RNA large subunit methyltransferase E (209 aa).

S-adenosyl-L-methionine contacts are provided by Gly63, Trp65, Asp83, Asp99, and Asp124. The Proton acceptor role is filled by Lys164.

The protein belongs to the class I-like SAM-binding methyltransferase superfamily. RNA methyltransferase RlmE family.

The protein resides in the cytoplasm. It carries out the reaction uridine(2552) in 23S rRNA + S-adenosyl-L-methionine = 2'-O-methyluridine(2552) in 23S rRNA + S-adenosyl-L-homocysteine + H(+). In terms of biological role, specifically methylates the uridine in position 2552 of 23S rRNA at the 2'-O position of the ribose in the fully assembled 50S ribosomal subunit. The sequence is that of Ribosomal RNA large subunit methyltransferase E from Shewanella sp. (strain MR-7).